We begin with the raw amino-acid sequence, 163 residues long: Phosphopantetheine adenylyltransferase (163 aa).

Thr10 serves as a coordination point for substrate. Residues Thr10–Phe11 and His18 each bind ATP. The substrate site is built by Lys42, Leu74, and Arg88. ATP contacts are provided by residues Gly89–Arg91, Glu99, and Asn124–Thr130.

Belongs to the bacterial CoaD family. Homohexamer. It depends on Mg(2+) as a cofactor.

It is found in the cytoplasm. The catalysed reaction is (R)-4'-phosphopantetheine + ATP + H(+) = 3'-dephospho-CoA + diphosphate. Its pathway is cofactor biosynthesis; coenzyme A biosynthesis; CoA from (R)-pantothenate: step 4/5. In terms of biological role, reversibly transfers an adenylyl group from ATP to 4'-phosphopantetheine, yielding dephospho-CoA (dPCoA) and pyrophosphate. This is Phosphopantetheine adenylyltransferase from Shewanella baltica (strain OS223).